The chain runs to 166 residues: Large ribosomal subunit protein uL11x (166 aa).

It belongs to the universal ribosomal protein uL11 family.

Its function is as follows. Binds directly to 26S ribosomal RNA. The protein is Large ribosomal subunit protein uL11x (RPL12C) of Arabidopsis thaliana (Mouse-ear cress).